The sequence spans 173 residues: NADH-ubiquinone oxidoreductase chain 6 (173 aa).

5 consecutive transmembrane segments (helical) span residues 1–21 (MTYF…AVAS), 27–47 (YGVV…LSLG), 48–68 (VSFV…VVFV), 91–111 (GVSF…IGCL), and 139–159 (CGVG…FVVL).

The protein belongs to the complex I subunit 6 family.

Its subcellular location is the mitochondrion membrane. The enzyme catalyses a ubiquinone + NADH + 5 H(+)(in) = a ubiquinol + NAD(+) + 4 H(+)(out). Functionally, core subunit of the mitochondrial membrane respiratory chain NADH dehydrogenase (Complex I) that is believed to belong to the minimal assembly required for catalysis. Complex I functions in the transfer of electrons from NADH to the respiratory chain. The immediate electron acceptor for the enzyme is believed to be ubiquinone. The polypeptide is NADH-ubiquinone oxidoreductase chain 6 (MT-ND6) (Fratercula cirrhata (Tufted puffin)).